Here is a 394-residue protein sequence, read N- to C-terminus: Elongation factor Tu (394 aa).

Positions 10-204 constitute a tr-type G domain; the sequence is KPHVNVGTIG…ALDSYIPEPE (195 aa). The G1 stretch occupies residues 19-26; the sequence is GHVDHGKT. Residue 19–26 coordinates GTP; sequence GHVDHGKT. Position 26 (T26) interacts with Mg(2+). Residues 60-64 form a G2 region; the sequence is GITIS. Positions 81-84 are G3; the sequence is DCPG. Residues 81-85 and 136-139 each bind GTP; these read DCPGH and NKCD. Residues 136-139 form a G4 region; sequence NKCD. The tract at residues 174–176 is G5; it reads SAL.

The protein belongs to the TRAFAC class translation factor GTPase superfamily. Classic translation factor GTPase family. EF-Tu/EF-1A subfamily. In terms of assembly, monomer.

It localises to the cytoplasm. It carries out the reaction GTP + H2O = GDP + phosphate + H(+). In terms of biological role, GTP hydrolase that promotes the GTP-dependent binding of aminoacyl-tRNA to the A-site of ribosomes during protein biosynthesis. The sequence is that of Elongation factor Tu from Pseudoalteromonas atlantica (strain T6c / ATCC BAA-1087).